A 140-amino-acid polypeptide reads, in one-letter code: ATP synthase epsilon chain (140 aa).

This sequence belongs to the ATPase epsilon chain family. F-type ATPases have 2 components, CF(1) - the catalytic core - and CF(0) - the membrane proton channel. CF(1) has five subunits: alpha(3), beta(3), gamma(1), delta(1), epsilon(1). CF(0) has three main subunits: a, b and c.

It localises to the cell inner membrane. In terms of biological role, produces ATP from ADP in the presence of a proton gradient across the membrane. This Thermodesulfovibrio yellowstonii (strain ATCC 51303 / DSM 11347 / YP87) protein is ATP synthase epsilon chain.